The sequence spans 72 residues: Translation initiation factor IF-1 (72 aa).

An S1-like domain is found at 1–72 (MAKDDVIQMQ…SRARIVFRAK (72 aa)).

This sequence belongs to the IF-1 family. As to quaternary structure, component of the 30S ribosomal translation pre-initiation complex which assembles on the 30S ribosome in the order IF-2 and IF-3, IF-1 and N-formylmethionyl-tRNA(fMet); mRNA recruitment can occur at any time during PIC assembly.

The protein localises to the cytoplasm. In terms of biological role, one of the essential components for the initiation of protein synthesis. Stabilizes the binding of IF-2 and IF-3 on the 30S subunit to which N-formylmethionyl-tRNA(fMet) subsequently binds. Helps modulate mRNA selection, yielding the 30S pre-initiation complex (PIC). Upon addition of the 50S ribosomal subunit IF-1, IF-2 and IF-3 are released leaving the mature 70S translation initiation complex. In Burkholderia thailandensis (strain ATCC 700388 / DSM 13276 / CCUG 48851 / CIP 106301 / E264), this protein is Translation initiation factor IF-1.